A 218-amino-acid polypeptide reads, in one-letter code: Phosphatidylserine decarboxylase proenzyme (218 aa).

Catalysis depends on Ser188, which acts as the Schiff-base intermediate with substrate; via pyruvic acid. Ser188 carries the pyruvic acid (Ser); by autocatalysis modification.

The protein belongs to the phosphatidylserine decarboxylase family. PSD-A subfamily. As to quaternary structure, heterodimer of a large membrane-associated beta subunit and a small pyruvoyl-containing alpha subunit. The cofactor is pyruvate. Post-translationally, is synthesized initially as an inactive proenzyme. Formation of the active enzyme involves a self-maturation process in which the active site pyruvoyl group is generated from an internal serine residue via an autocatalytic post-translational modification. Two non-identical subunits are generated from the proenzyme in this reaction, and the pyruvate is formed at the N-terminus of the alpha chain, which is derived from the carboxyl end of the proenzyme. The post-translation cleavage follows an unusual pathway, termed non-hydrolytic serinolysis, in which the side chain hydroxyl group of the serine supplies its oxygen atom to form the C-terminus of the beta chain, while the remainder of the serine residue undergoes an oxidative deamination to produce ammonia and the pyruvoyl prosthetic group on the alpha chain.

It localises to the cell membrane. The enzyme catalyses a 1,2-diacyl-sn-glycero-3-phospho-L-serine + H(+) = a 1,2-diacyl-sn-glycero-3-phosphoethanolamine + CO2. It functions in the pathway phospholipid metabolism; phosphatidylethanolamine biosynthesis; phosphatidylethanolamine from CDP-diacylglycerol: step 2/2. Its function is as follows. Catalyzes the formation of phosphatidylethanolamine (PtdEtn) from phosphatidylserine (PtdSer). The protein is Phosphatidylserine decarboxylase proenzyme of Streptomyces coelicolor (strain ATCC BAA-471 / A3(2) / M145).